A 384-amino-acid polypeptide reads, in one-letter code: Lipid-A-disaccharide synthase 1 (384 aa).

Belongs to the LpxB family.

The catalysed reaction is a lipid X + a UDP-2-N,3-O-bis[(3R)-3-hydroxyacyl]-alpha-D-glucosamine = a lipid A disaccharide + UDP + H(+). The protein operates within bacterial outer membrane biogenesis; LPS lipid A biosynthesis. Its function is as follows. Condensation of UDP-2,3-diacylglucosamine and 2,3-diacylglucosamine-1-phosphate to form lipid A disaccharide, a precursor of lipid A, a phosphorylated glycolipid that anchors the lipopolysaccharide to the outer membrane of the cell. This Legionella pneumophila subsp. pneumophila (strain Philadelphia 1 / ATCC 33152 / DSM 7513) protein is Lipid-A-disaccharide synthase 1.